Reading from the N-terminus, the 366-residue chain is Anhydro-N-acetylmuramic acid kinase (366 aa).

10–17 (GTSLDGVD) provides a ligand contact to ATP.

Belongs to the anhydro-N-acetylmuramic acid kinase family.

The catalysed reaction is 1,6-anhydro-N-acetyl-beta-muramate + ATP + H2O = N-acetyl-D-muramate 6-phosphate + ADP + H(+). The protein operates within amino-sugar metabolism; 1,6-anhydro-N-acetylmuramate degradation. It functions in the pathway cell wall biogenesis; peptidoglycan recycling. In terms of biological role, catalyzes the specific phosphorylation of 1,6-anhydro-N-acetylmuramic acid (anhMurNAc) with the simultaneous cleavage of the 1,6-anhydro ring, generating MurNAc-6-P. Is required for the utilization of anhMurNAc either imported from the medium or derived from its own cell wall murein, and thus plays a role in cell wall recycling. This chain is Anhydro-N-acetylmuramic acid kinase, found in Nitrobacter winogradskyi (strain ATCC 25391 / DSM 10237 / CIP 104748 / NCIMB 11846 / Nb-255).